We begin with the raw amino-acid sequence, 103 residues long: Small ribosomal subunit protein uS10 (103 aa).

The protein belongs to the universal ribosomal protein uS10 family. Part of the 30S ribosomal subunit.

Its function is as follows. Involved in the binding of tRNA to the ribosomes. The protein is Small ribosomal subunit protein uS10 of Pseudoalteromonas atlantica (strain T6c / ATCC BAA-1087).